The chain runs to 242 residues: Triosephosphate isomerase (242 aa).

9–11 (NWK) provides a ligand contact to substrate. H96 functions as the Electrophile in the catalytic mechanism. E165 (proton acceptor) is an active-site residue. Substrate-binding positions include G171, S204, and 225–226 (GG).

The protein belongs to the triosephosphate isomerase family. In terms of assembly, homodimer.

It is found in the cytoplasm. The enzyme catalyses D-glyceraldehyde 3-phosphate = dihydroxyacetone phosphate. Its pathway is carbohydrate biosynthesis; gluconeogenesis. The protein operates within carbohydrate degradation; glycolysis; D-glyceraldehyde 3-phosphate from glycerone phosphate: step 1/1. Involved in the gluconeogenesis. Catalyzes stereospecifically the conversion of dihydroxyacetone phosphate (DHAP) to D-glyceraldehyde-3-phosphate (G3P). This is Triosephosphate isomerase from Synechocystis sp. (strain ATCC 27184 / PCC 6803 / Kazusa).